A 506-amino-acid polypeptide reads, in one-letter code: Dipeptide and tripeptide permease A (506 aa).

The Cytoplasmic segment spans residues 1-36; it reads MSTANNNSEHPESVSLNAFKQPKAFYLIFSIELWER. The helical transmembrane segment at 37 to 57 threads the bilayer; sequence FGYYGLQGIMAVYLVKMLGLS. Residues 58–61 lie on the Periplasmic side of the membrane; that stretch reads EADS. Residues 62 to 82 traverse the membrane as a helical segment; that stretch reads ITLFSSFSALVYGFVAIGGWL. The Cytoplasmic segment spans residues 83 to 91; it reads GDKVLGSKR. Transmembrane regions (helical) follow at residues 92 to 112 and 113 to 133; these read VIVL…YSGH and EIFW…LFKA. Over 134–155 the chain is Cytoplasmic; the sequence is NPSSLLSTCYEKDDPRLDGAFT. A helical membrane pass occupies residues 156-176; that stretch reads MYYMSVNIGSFLSMLATPWLA. The Periplasmic portion of the chain corresponds to 177–180; sequence AKYG. A helical transmembrane segment spans residues 181–201; that stretch reads WSVAFSLSVVGMLITLVNFMV. The Cytoplasmic segment spans residues 202–222; the sequence is CHKWVKQHGSKPDFKPLQVKK. Residues 223 to 243 traverse the membrane as a helical segment; it reads LLMVLVGVVALVALSSWLLHN. The Periplasmic segment spans residues 244–248; sequence QIIAR. A helical membrane pass occupies residues 249-269; that stretch reads WALAIVSIGIVIVFAKETFAL. Topologically, residues 270–276 are cytoplasmic; that stretch reads HGAARRK. A helical membrane pass occupies residues 277–297; the sequence is MIVAFLLMLEAVVFFVLYSQM. The Periplasmic portion of the chain corresponds to 298 to 322; sequence PTSLNFFAIHNVEHNILGLAFEPEQ. The chain crosses the membrane as a helical span at residues 323 to 343; it reads YQALNPFWIMLASPILAALYN. The Cytoplasmic segment spans residues 344 to 354; that stretch reads KMGDRLPMPHK. Residues 355–375 form a helical membrane-spanning segment; sequence FAFGMILCSGAFLVLPWGASF. Residues 376-385 lie on the Periplasmic side of the membrane; it reads ANEQGIVSVN. Residues 386 to 406 traverse the membrane as a helical segment; that stretch reads WLILSYALQSIGELMISGLGL. At 407–416 the chain is on the cytoplasmic side; the sequence is AMVAQLVPQR. The helical transmembrane segment at 417–437 threads the bilayer; the sequence is LMGFIMGSWFLTTAAAALIAG. Topologically, residues 438–461 are periplasmic; it reads KVAGLTAVPGDVNDAHASLAIYSH. The chain crosses the membrane as a helical span at residues 462–482; that stretch reads VFMQIGIATAVIAILMMLTAP. Residues 483-506 are Cytoplasmic-facing; the sequence is KLHRMTLDTAEDTEKKAQAAAITN.

The protein belongs to the major facilitator superfamily. Proton-dependent oligopeptide transporter (POT/PTR) (TC 2.A.17) family. DtpA subfamily.

The protein resides in the cell inner membrane. Functionally, proton-dependent permease that transports di- and tripeptides. The polypeptide is Dipeptide and tripeptide permease A (Serratia proteamaculans (strain 568)).